A 270-amino-acid chain; its full sequence is Dermonecrotic toxin LhSicTox-alphaIA2aiii (270 aa).

His2 is a catalytic residue. The Mg(2+) site is built by Glu22 and Asp24. His38 functions as the Nucleophile in the catalytic mechanism. 2 cysteine pairs are disulfide-bonded: Cys42/Cys48 and Cys44/Cys187. Mg(2+) is bound at residue Asp82.

This sequence belongs to the arthropod phospholipase D family. Class II subfamily. Mg(2+) serves as cofactor. Expressed by the venom gland.

It localises to the secreted. The catalysed reaction is an N-(acyl)-sphingosylphosphocholine = an N-(acyl)-sphingosyl-1,3-cyclic phosphate + choline. It catalyses the reaction an N-(acyl)-sphingosylphosphoethanolamine = an N-(acyl)-sphingosyl-1,3-cyclic phosphate + ethanolamine. It carries out the reaction a 1-acyl-sn-glycero-3-phosphocholine = a 1-acyl-sn-glycero-2,3-cyclic phosphate + choline. The enzyme catalyses a 1-acyl-sn-glycero-3-phosphoethanolamine = a 1-acyl-sn-glycero-2,3-cyclic phosphate + ethanolamine. In terms of biological role, dermonecrotic toxins cleave the phosphodiester linkage between the phosphate and headgroup of certain phospholipids (sphingolipid and lysolipid substrates), forming an alcohol (often choline) and a cyclic phosphate. This toxin acts on sphingomyelin (SM). It may also act on ceramide phosphoethanolamine (CPE), lysophosphatidylcholine (LPC) and lysophosphatidylethanolamine (LPE), but not on lysophosphatidylserine (LPS), and lysophosphatidylglycerol (LPG). It acts by transphosphatidylation, releasing exclusively cyclic phosphate products as second products. Induces dermonecrosis, hemolysis, increased vascular permeability, edema, inflammatory response, and platelet aggregation. This is Dermonecrotic toxin LhSicTox-alphaIA2aiii from Loxosceles hirsuta (Recluse spider).